A 416-amino-acid polypeptide reads, in one-letter code: Pectin acetylesterase 3 (416 aa).

An N-terminal signal peptide occupies residues 1–25 (MKSVLRIAAAIFWLWLFIVLGVIGS). A glycan (N-linked (GlcNAc...) asparagine) is linked at Asn-131. Residues Ser-198 and Asp-294 each act as charge relay system in the active site. Residue Asn-324 is glycosylated (N-linked (GlcNAc...) asparagine). The active-site Charge relay system is His-361.

This sequence belongs to the pectinacetylesterase family.

Its subcellular location is the secreted. The protein localises to the cell wall. Hydrolyzes acetyl esters in homogalacturonan regions of pectin. In type I primary cell wall, galacturonic acid residues of pectin can be acetylated at the O-2 and O-3 positions. Decreasing the degree of acetylation of pectin gels in vitro alters their physical properties. This is Pectin acetylesterase 3 from Arabidopsis thaliana (Mouse-ear cress).